Reading from the N-terminus, the 333-residue chain is Acetyltransferase Pat (333 aa).

Residues 85–88 (GEIA), 95–96 (RT), and Arg135 each bind 3',5'-cyclic AMP. The N-acetyltransferase domain occupies 153–317 (FYLRPVLPGD…DTVPFEPELI (165 aa)). Residue Glu211 participates in Mg(2+) binding. Substrate-binding positions include 237-239 (FTV), 245-250 (GRGIGS), Asn276, and Arg285.

As to quaternary structure, homodimer. The cofactor is Mg(2+).

Allosterically regulated by cAMP. Functionally, catalyzes specifically the acetylation of the epsilon-amino group of a highly conserved lysine residue in acetyl-CoA synthetase (ACS) and of the universal stress protein (USP) MSMEG_4207. Acetylation results in the inactivation of ACS activity and could be important for mycobacteria to adjust to environmental changes. In Mycolicibacterium smegmatis (strain ATCC 700084 / mc(2)155) (Mycobacterium smegmatis), this protein is Acetyltransferase Pat.